Here is a 541-residue protein sequence, read N- to C-terminus: Acyl-CoA ligase M9 (541 aa).

Alanine 186–lysine 197 serves as a coordination point for AMP. The segment at glutamate 445–lysine 519 is AMP-binding.

This sequence belongs to the ATP-dependent AMP-binding enzyme family.

It participates in secondary metabolite biosynthesis. Functionally, acyl-CoA ligase; part of the gene cluster that mediates the biosynthesis of squalestatin S1 (SQS1, also known as zaragozic acid A), a heavily oxidized fungal polyketide that offers potent cholesterol lowering activity by targeting squalene synthase (SS). SQS1 is composed of a 2,8-dioxobicyclic[3.2.1]octane-3,4,5-tricarboxyclic acid core that is connected to two lipophilic polyketide arms. These initial steps feature the priming of an unusual benzoic acid starter unit onto the highly reducing polyketide synthase pks2, followed by oxaloacetate extension and product release to generate a tricarboxylic acid containing product. The phenylalanine ammonia lyase (PAL) M7 and the acyl-CoA ligase M9 are involved in transforming phenylalanine into benzoyl-CoA. The citrate synthase-like protein R3 is involved in connecting the C-alpha-carbons of the hexaketide chain and oxaloacetate to afford the tricarboxylic acid unit. The potential hydrolytic enzymes, M8 and M10, are in close proximity to pks2 and may participate in product release. On the other side, the tetraketide arm is synthesized by a the squalestatin tetraketide synthase pks1 and enzymatically esterified to the core in the last biosynthetic step, by the acetyltransferase M4. The biosynthesis of the tetraketide must involve 3 rounds of chain extension. After the first and second rounds methyl-transfer occurs, and in all rounds of extension the ketoreductase and dehydratase are active. The enoyl reductase and C-MeT of pks1 are not active in the final round of extension. The acetyltransferase M4 appears to have a broad substrate selectivity for its acyl CoA substrate, allowing the in vitro synthesis of novel squalestatins. The biosynthesis of SQS1 requires several oxidative steps likely performed by oxidoreductases M1, R1 and R2. Finally, in support of the identification of the cluster as being responsible for SQS1 production, the cluster contains a gene encoding a putative squalene synthase (SS) R6, suggesting a likely mechanism for self-resistance. In Phoma sp. (strain ATCC 20986 / MF5453), this protein is Acyl-CoA ligase M9.